Consider the following 890-residue polypeptide: MSDTVRVYEIAEEAGASSQDVIAKAKDLGIELKSPQTAVSYEDAEEITKYMMTGKSERLATKPAKVKKVVKKEEVKKETEEIETPKEKIETVQKVEKEIIKKPELKKVEISKPISKAPQKSEEESENLENPNKIVPKRKGLVIIKKKRPKEEELEEQQTITENQSKKQMKSLSEILGGVDDEEKSYNEPKNKENDDIKKQKVKKEKKKPLIKTQDHGKKLDVDREYSDEFASSDDSLLGEEIVLLDMDLSDSYKIFDEPKPQNIVNQSRSSKPAAFGNVPQGLKRGKRKKRIVRTQEKAEITSVTIPEDIRVYEFAEACGKSPAEVITVLFSLGMMVTKNDFLKQDELEILGEEFGIEVTVKDALEDVNYVETYNDEEDIDTSSFVTRPPVVTIMGHVDHGKTSLLDKIRSSKVAAGEAGGITQHITSYTVTKNGQEITFVDTPGHAAFSAMRARGANVTDIIIIVVAADDGVKMQTEEVISHAKASGCPIIVAMNKMDKETANPDMVKAQMAEKGLTPIDWGGDIEFIGVSARTGDGIEDLLENILLQAEILELKADPTAKAKATVIEASLEKGRGPVANVIVQNGTLKIGDNIVCDTTFGRVKAITDDNGKPVKELGLSQTGTVLGLNEVPTTGSVLVAMDTEKEVREIATTRAEHARAKELSKSTKVSLEEMSGLIAEGKIKQLPVIIKADVGGSLEAIKGSLEKIANDEVKVKVVHAAVGGITESDLVLAGASGECIILGFNVRPTGSVKAKAKADGVTINTYSIIYDLIDDVKHALSGMMSAVIREENTGQAEVRDTFVVPKVGTVAGCLVTDGKVIRGGHARIIRDGVVTYTGKISSLKRFKDDVKEVANGYECGIMFDKFNDIKVGDFIETFIQIEEKVSVDD.

The tract at residues 110-216 (ISKPISKAPQ…KKPLIKTQDH (107 aa)) is disordered. A compositionally biased stretch (basic residues) spans 135–148 (VPKRKGLVIIKKKR). Residues 184–199 (KSYNEPKNKENDDIKK) show a composition bias toward basic and acidic residues. Positions 200-210 (QKVKKEKKKPL) are enriched in basic residues. In terms of domain architecture, tr-type G spans 387 to 554 (TRPPVVTIMG…NILLQAEILE (168 aa)). The segment at 396–403 (GHVDHGKT) is G1. A GTP-binding site is contributed by 396–403 (GHVDHGKT). A G2 region spans residues 421-425 (GITQH). The segment at 442-445 (DTPG) is G3. Residues 442 to 446 (DTPGH) and 496 to 499 (NKMD) each bind GTP. Residues 496–499 (NKMD) are G4. The segment at 532–534 (SAR) is G5.

It belongs to the TRAFAC class translation factor GTPase superfamily. Classic translation factor GTPase family. IF-2 subfamily.

It is found in the cytoplasm. Its function is as follows. One of the essential components for the initiation of protein synthesis. Protects formylmethionyl-tRNA from spontaneous hydrolysis and promotes its binding to the 30S ribosomal subunits. Also involved in the hydrolysis of GTP during the formation of the 70S ribosomal complex. The sequence is that of Translation initiation factor IF-2 from Aliarcobacter butzleri (strain RM4018) (Arcobacter butzleri).